Consider the following 244-residue polypeptide: tRNA (guanine-N(7)-)-methyltransferase (244 aa).

S-adenosyl-L-methionine contacts are provided by glutamate 74, glutamate 99, aspartate 126, and aspartate 149. Aspartate 149 is a catalytic residue. Residues lysine 153, aspartate 185, and 222-225 (TKFE) each bind substrate.

The protein belongs to the class I-like SAM-binding methyltransferase superfamily. TrmB family.

The enzyme catalyses guanosine(46) in tRNA + S-adenosyl-L-methionine = N(7)-methylguanosine(46) in tRNA + S-adenosyl-L-homocysteine. It participates in tRNA modification; N(7)-methylguanine-tRNA biosynthesis. In terms of biological role, catalyzes the formation of N(7)-methylguanine at position 46 (m7G46) in tRNA. The protein is tRNA (guanine-N(7)-)-methyltransferase of Colwellia psychrerythraea (strain 34H / ATCC BAA-681) (Vibrio psychroerythus).